We begin with the raw amino-acid sequence, 223 residues long: Endonuclease NucS (223 aa).

Belongs to the NucS endonuclease family.

It is found in the cytoplasm. Functionally, cleaves both 3' and 5' ssDNA extremities of branched DNA structures. This chain is Endonuclease NucS, found in Streptomyces avermitilis (strain ATCC 31267 / DSM 46492 / JCM 5070 / NBRC 14893 / NCIMB 12804 / NRRL 8165 / MA-4680).